Here is a 335-residue protein sequence, read N- to C-terminus: Anthranilate phosphoribosyltransferase (335 aa).

5-phospho-alpha-D-ribose 1-diphosphate contacts are provided by residues Gly79, Gly82 to Asp83, Ser87, Asn89 to Thr92, Lys107 to Ser115, and Ser119. Position 79 (Gly79) interacts with anthranilate. Mg(2+) is bound at residue Ser91. Asn110 is a binding site for anthranilate. An anthranilate-binding site is contributed by Arg165. Mg(2+) is bound by residues Asp224 and Glu225.

The protein belongs to the anthranilate phosphoribosyltransferase family. In terms of assembly, homodimer. Requires Mg(2+) as cofactor.

The catalysed reaction is N-(5-phospho-beta-D-ribosyl)anthranilate + diphosphate = 5-phospho-alpha-D-ribose 1-diphosphate + anthranilate. The protein operates within amino-acid biosynthesis; L-tryptophan biosynthesis; L-tryptophan from chorismate: step 2/5. Functionally, catalyzes the transfer of the phosphoribosyl group of 5-phosphorylribose-1-pyrophosphate (PRPP) to anthranilate to yield N-(5'-phosphoribosyl)-anthranilate (PRA). The chain is Anthranilate phosphoribosyltransferase from Lactococcus lactis subsp. lactis (strain IL1403) (Streptococcus lactis).